A 540-amino-acid chain; its full sequence is Cytochrome bc1 complex cytochrome b subunit (540 aa).

Residues 40 to 60 (EIALYSFIILLLTGVYLTLFF) form a helical membrane-spanning segment. Residues His105 and His119 each coordinate heme. The next 3 helical transmembrane spans lie at 109–129 (ALTF…TGAF), 137–157 (WIIG…GYSL), and 169–189 (IMSA…WLIF). His206 and His221 together coordinate heme. 5 helical membrane-spanning segments follow: residues 207–227 (VLII…LVWY), 259–279 (FGLV…INAI), 325–345 (AFWV…YPFI), 371–391 (LGVM…NDLF), and 408–428 (IGLI…CLGL).

Belongs to the cytochrome b family. The cytochrome bc1 complex is composed of a cytochrome b (QcrB), the Rieske protein iron-sulfur (QcrA) and a diheme cytochrome c (QcrC) subunit. Heme is required as a cofactor.

It is found in the cell membrane. The catalysed reaction is a quinol + 2 Fe(III)-[cytochrome c](out) = a quinone + 2 Fe(II)-[cytochrome c](out) + 2 H(+)(out). Cytochrome b subunit of the cytochrome bc1 complex, an essential component of the respiratory electron transport chain required for ATP synthesis. The bc1 complex catalyzes the oxidation of menaquinol and the reduction of cytochrome c in the respiratory chain. The bc1 complex operates through a Q-cycle mechanism that couples electron transfer to generation of the proton gradient that drives ATP synthesis. The protein is Cytochrome bc1 complex cytochrome b subunit (qcrB) of Corynebacterium diphtheriae (strain ATCC 700971 / NCTC 13129 / Biotype gravis).